Consider the following 210-residue polypeptide: Redox-sensing transcriptional repressor Rex (210 aa).

The H-T-H motif DNA-binding region spans 17–56 (SYLHLVKKAEADKLEYISGTVIAEELELEPIQVRKDLTIT). 91-96 (GAGSLG) provides a ligand contact to NAD(+).

This sequence belongs to the transcriptional regulatory Rex family. As to quaternary structure, homodimer.

The protein resides in the cytoplasm. Modulates transcription in response to changes in cellular NADH/NAD(+) redox state. This chain is Redox-sensing transcriptional repressor Rex, found in Treponema denticola (strain ATCC 35405 / DSM 14222 / CIP 103919 / JCM 8153 / KCTC 15104).